The chain runs to 666 residues: Pentatricopeptide repeat-containing protein At1g64100 (666 aa).

PPR repeat units lie at residues 105 to 139, 140 to 174, 175 to 209, 225 to 259, 260 to 294, 295 to 329, 330 to 364, 365 to 399, 400 to 430, 431 to 465, 466 to 500, 501 to 535, 536 to 570, 571 to 605, and 606 to 640; these read TAVD…RIPL, NIYS…GFQP, DVVT…GFLE, VVIT…GLHI, DVVT…HIKP, DVVI…GIAP, NVFT…EINP, DVLT…CIFP, DTVT…MASP, DVVT…GLVA, NTTT…GVCP, DTIT…KIDL, DTVA…GVEP, DVQT…GHEP, and DNST…GFSG.

This sequence belongs to the PPR family. P subfamily.

The chain is Pentatricopeptide repeat-containing protein At1g64100 from Arabidopsis thaliana (Mouse-ear cress).